The primary structure comprises 311 residues: Retinol dehydrogenase 8 (311 aa).

9 to 18 (LISGCSSGIG) serves as a coordination point for NADP(+). 3 helical membrane-spanning segments follow: residues 86–106 (VLVN…SLAA), 137–157 (IVVI…VYAA), and 169–189 (LAIQ…GPVV). S142 contacts substrate. The Proton acceptor role is filled by Y155.

This sequence belongs to the short-chain dehydrogenases/reductases (SDR) family. In terms of tissue distribution, detected in photoreceptor outer segments in the retina (at protein level).

It is found in the membrane. It catalyses the reaction all-trans-retinol + NADP(+) = all-trans-retinal + NADPH + H(+). In terms of biological role, retinol dehydrogenase with a clear preference for NADP. Converts all-trans-retinal to all-trans-retinol. May play a role in the regeneration of visual pigment at high light intensity. The protein is Retinol dehydrogenase 8 (RDH8) of Homo sapiens (Human).